The sequence spans 155 residues: Ribosomal RNA large subunit methyltransferase H (155 aa).

Residues G104 and 123-128 (LSAMTF) each bind S-adenosyl-L-methionine.

The protein belongs to the RNA methyltransferase RlmH family. In terms of assembly, homodimer.

Its subcellular location is the cytoplasm. It catalyses the reaction pseudouridine(1915) in 23S rRNA + S-adenosyl-L-methionine = N(3)-methylpseudouridine(1915) in 23S rRNA + S-adenosyl-L-homocysteine + H(+). In terms of biological role, specifically methylates the pseudouridine at position 1915 (m3Psi1915) in 23S rRNA. This Oleidesulfovibrio alaskensis (strain ATCC BAA-1058 / DSM 17464 / G20) (Desulfovibrio alaskensis) protein is Ribosomal RNA large subunit methyltransferase H.